A 270-amino-acid chain; its full sequence is 5'-nucleotidase SurE (270 aa).

A divalent metal cation-binding residues include D14, D15, S46, and N104.

The protein belongs to the SurE nucleotidase family. A divalent metal cation serves as cofactor.

It localises to the cytoplasm. It carries out the reaction a ribonucleoside 5'-phosphate + H2O = a ribonucleoside + phosphate. In terms of biological role, nucleotidase that shows phosphatase activity on nucleoside 5'-monophosphates. In Microcystis aeruginosa (strain NIES-843 / IAM M-2473), this protein is 5'-nucleotidase SurE.